Reading from the N-terminus, the 633-residue chain is Probable extracellular metalloproteinase 5 (633 aa).

The N-terminal stretch at 1–20 is a signal peptide; sequence MHGLLLAAAGLLSLPLHVLA. Residues 21 to 244 constitute a propeptide that is removed on maturation; the sequence is HPQPSTNLAG…VHNVVDYVSH (224 aa). Residue N285 is glycosylated (N-linked (GlcNAc...) asparagine). A Zn(2+)-binding site is contributed by H428. E429 is an active-site residue. H432 lines the Zn(2+) pocket. N592 and N621 each carry an N-linked (GlcNAc...) asparagine glycan.

This sequence belongs to the peptidase M36 family. Requires Zn(2+) as cofactor.

It localises to the secreted. In terms of biological role, secreted metalloproteinase probably acting as a virulence factor. The chain is Probable extracellular metalloproteinase 5 (MEP5) from Arthroderma benhamiae (strain ATCC MYA-4681 / CBS 112371) (Trichophyton mentagrophytes).